Here is a 227-residue protein sequence, read N- to C-terminus: Small ribosomal subunit protein uS3 (227 aa).

One can recognise a KH type-2 domain in the interval 39–108; it reads IRKFVEERYK…DVTVNVDEVK (70 aa).

This sequence belongs to the universal ribosomal protein uS3 family. As to quaternary structure, part of the 30S ribosomal subunit. Forms a tight complex with proteins S10 and S14.

Its function is as follows. Binds the lower part of the 30S subunit head. Binds mRNA in the 70S ribosome, positioning it for translation. The sequence is that of Small ribosomal subunit protein uS3 from Persephonella marina (strain DSM 14350 / EX-H1).